The sequence spans 126 residues: MPKSKELVSSSSSASDSDSEVDKKAKRKKQAAPEKPVKKQKTGESSKGAASSKQSSNRDENMFQIGKMRYVSVRDFKGKVLIDIREYWMDQEGEMKPGRKGISLNPEQWNQLKEQISDIDDAVRKL.

A disordered region spans residues 1–63 (MPKSKELVSS…QSSNRDENMF (63 aa)). The regulatory stretch occupies residues 2–50 (PKSKELVSSSSSASDSDSEVDKKAKRKKQAAPEKPVKKQKTGESSKGAA). Low complexity predominate over residues 7–16 (LVSSSSSASD). The span at 31 to 44 (AAPEKPVKKQKTGE) shows a compositional bias: basic and acidic residues. The span at 45 to 55 (SSKGAASSKQS) shows a compositional bias: low complexity. Positions 76–100 (FKGKVLIDIREYWMDQEGEMKPGRK) are interaction with ssDNA.

Belongs to the transcriptional coactivator PC4 family.

The protein resides in the nucleus. Functionally, general coactivator that functions cooperatively with TAFs and mediates functional interactions between upstream activators and the general transcriptional machinery. May be involved in stabilizing the multiprotein transcription complex. Binds single-stranded DNA. Also binds, in vitro, non-specifically to double-stranded DNA (ds DNA). This chain is Activated RNA polymerase II transcriptional coactivator p15 (SUB1), found in Gallus gallus (Chicken).